The sequence spans 92 residues: Large ribosomal subunit protein bL27 (92 aa).

Positions 1-9 (MIKANLQLF) are excised as a propeptide.

The protein belongs to the bacterial ribosomal protein bL27 family. In terms of processing, the N-terminus is cleaved by ribosomal processing cysteine protease Prp.

This chain is Large ribosomal subunit protein bL27, found in Acetivibrio thermocellus (strain ATCC 27405 / DSM 1237 / JCM 9322 / NBRC 103400 / NCIMB 10682 / NRRL B-4536 / VPI 7372) (Clostridium thermocellum).